Reading from the N-terminus, the 490-residue chain is Homoserine O-acetyltransferase (490 aa).

One can recognise an AB hydrolase-1 domain in the interval 47 to 355; sequence NAILVCHALT…DYGHDAFLLE (309 aa). Residue Ser-152 is the Nucleophile of the active site. Arg-222 is a substrate binding site. Catalysis depends on residues Asp-316 and His-349. Asp-350 contributes to the substrate binding site. CBS domains lie at 376–436 and 437–490; these read MKTD…LEDV and MTKD…ISSY.

This sequence belongs to the AB hydrolase superfamily. MetX family. In terms of assembly, homodimer.

The protein resides in the cytoplasm. The enzyme catalyses L-homoserine + acetyl-CoA = O-acetyl-L-homoserine + CoA. The protein operates within amino-acid biosynthesis; L-methionine biosynthesis via de novo pathway; O-acetyl-L-homoserine from L-homoserine: step 1/1. Functionally, transfers an acetyl group from acetyl-CoA to L-homoserine, forming acetyl-L-homoserine. The protein is Homoserine O-acetyltransferase of Methanobrevibacter ruminantium (strain ATCC 35063 / DSM 1093 / JCM 13430 / OCM 146 / M1) (Methanobacterium ruminantium).